Reading from the N-terminus, the 492-residue chain is Probable glycogen synthase 2 (492 aa).

Position 15 (Lys15) interacts with ADP-alpha-D-glucose.

It belongs to the glycosyltransferase 1 family. Bacterial/plant glycogen synthase subfamily.

It carries out the reaction [(1-&gt;4)-alpha-D-glucosyl](n) + ADP-alpha-D-glucose = [(1-&gt;4)-alpha-D-glucosyl](n+1) + ADP + H(+). It functions in the pathway glycan biosynthesis; glycogen biosynthesis. Its function is as follows. Synthesizes alpha-1,4-glucan chains using ADP-glucose. This Nostoc sp. (strain PCC 7120 / SAG 25.82 / UTEX 2576) protein is Probable glycogen synthase 2 (glgA2).